Reading from the N-terminus, the 187-residue chain is MYSASDLRKNLRIKLEGDPYIITEFNFVKPGKGQALYRCKLKNMITGNQFERTFRSVDNFEAADLQEKKMQFLYTEEDRYCFMDNTSYEQIFLTADQVGDAAHFLIDNLEVEILLFEDKPLGISLPNFVDLVVTKADPWAKGDTVSGNTKPVTLQTGYQIMVPPFIEEGEKIRVDTRTGEYLTRVKG.

This sequence belongs to the elongation factor P family.

The protein localises to the cytoplasm. It participates in protein biosynthesis; polypeptide chain elongation. Its function is as follows. Involved in peptide bond synthesis. Stimulates efficient translation and peptide-bond synthesis on native or reconstituted 70S ribosomes in vitro. Probably functions indirectly by altering the affinity of the ribosome for aminoacyl-tRNA, thus increasing their reactivity as acceptors for peptidyl transferase. This is Elongation factor P from Syntrophus aciditrophicus (strain SB).